We begin with the raw amino-acid sequence, 280 residues long: Ribosomal RNA small subunit methyltransferase A (280 aa).

Residues histidine 13, leucine 15, glycine 40, glutamate 61, aspartate 85, and asparagine 106 each contribute to the S-adenosyl-L-methionine site. Residues 258–280 (RPPADVEDANAPHTEQGKGDNSQ) form a disordered region.

Belongs to the class I-like SAM-binding methyltransferase superfamily. rRNA adenine N(6)-methyltransferase family. RsmA subfamily.

The protein localises to the cytoplasm. The enzyme catalyses adenosine(1518)/adenosine(1519) in 16S rRNA + 4 S-adenosyl-L-methionine = N(6)-dimethyladenosine(1518)/N(6)-dimethyladenosine(1519) in 16S rRNA + 4 S-adenosyl-L-homocysteine + 4 H(+). In terms of biological role, specifically dimethylates two adjacent adenosines (A1518 and A1519) in the loop of a conserved hairpin near the 3'-end of 16S rRNA in the 30S particle. May play a critical role in biogenesis of 30S subunits. This chain is Ribosomal RNA small subunit methyltransferase A, found in Alcanivorax borkumensis (strain ATCC 700651 / DSM 11573 / NCIMB 13689 / SK2).